Reading from the N-terminus, the 242-residue chain is ATP synthase subunit 4, mitochondrial (242 aa).

The N-terminal 35 residues, 1 to 35, are a transit peptide targeting the mitochondrion; sequence MSFRALTMRSAVARTALNNTIRSARVATPYLGIRH.

Belongs to the eukaryotic ATPase B chain family. In terms of assembly, F-type ATPases have 2 components, CF(1) - the catalytic core - and CF(0) - the membrane proton channel. In yeast, the dimeric form of ATP synthase consists of 17 polypeptides: alpha, beta, gamma, delta, epsilon, 4 (B), 5 (OSCP), 6 (A), 8, 9 (C), d, E (Tim11), f, g, h, i/j and k.

The protein localises to the mitochondrion. Its subcellular location is the mitochondrion inner membrane. Mitochondrial membrane ATP synthase (F(1)F(0) ATP synthase or Complex V) produces ATP from ADP in the presence of a proton gradient across the membrane which is generated by electron transport complexes of the respiratory chain. F-type ATPases consist of two structural domains, F(1) - containing the extramembraneous catalytic core, and F(0) - containing the membrane proton channel, linked together by a central stalk and a peripheral stalk. During catalysis, ATP synthesis in the catalytic domain of F(1) is coupled via a rotary mechanism of the central stalk subunits to proton translocation. Part of the complex F(0) domain and the peripheric stalk, which acts as a stator to hold the catalytic alpha(3)beta(3) subcomplex and subunit a/ATP6 static relative to the rotary elements. This chain is ATP synthase subunit 4, mitochondrial (ATP4), found in Candida glabrata (strain ATCC 2001 / BCRC 20586 / JCM 3761 / NBRC 0622 / NRRL Y-65 / CBS 138) (Yeast).